The sequence spans 523 residues: Nuclear receptor ROR-alpha (523 aa).

The span at 1–26 shows a compositional bias: low complexity; sequence MESAPAAPDPAASEPGSSGSEAAAGS. Residues 1 to 63 are disordered; the sequence is MESAPAAPDP…SRGISVTKKT (63 aa). Residue K38 is modified to N6-methyllysine. 2 NR C4-type zinc fingers span residues 73-93 and 109-133; these read CKIC…CEGC and CPRQ…LQKC. A DNA-binding region (nuclear receptor) is located at residues 73 to 138; sequence CKICGDKSSG…RLQKCLAVGM (66 aa). Positions 154-183 are disordered; the sequence is DSLYAEVQKHRMQQQQRDHQQQPGEAEPLT. T183 is subject to Phosphothreonine; by MAPK1. K240 participates in a covalent cross-link: Glycyl lysine isopeptide (Lys-Gly) (interchain with G-Cter in SUMO). Residues 272–510 form the NR LBD domain; the sequence is ELEHLAQNIS…LHFPPLYKEL (239 aa). Positions 506-511 match the AF-2 motif; that stretch reads LYKELF.

This sequence belongs to the nuclear hormone receptor family. NR1 subfamily. As to quaternary structure, monomer. Interacts (via the DNA-binding domain) with HIF1A; the interaction enhances HIF1A transcription under hypoxia through increasing protein stability. Interacts with CEBPB; the interaction disrupts the interaction CEBPB:EP300. Interacts with the coactivators NCOA2, PPARGC1A (via LXXLL motif), EP300 and MED1. Interacts with the corepressor NCOR1. Interacts with MAGED1 and CTNNB1. Interacts with CRY1 and PER2. Interacts (via AF-2 motif) with PROX1. Interacts with NRIP1. Isoform 4 interacts (via AF-2 motif) with isoform 1 of FOXP3 (via LXXLL motif). Post-translationally, phosphorylation by conventional PKCs in neurons inhibits transcriptional activity. Phosphorylated on Thr-183 by MAPK1/ERK1 in vitro. In terms of processing, sumoylated by SENP1 and SENP2. Sumoylation, promoted by PIAS2, PIAS3, PIAS4 but not PIAS1, enhances the transcriptional activity. Desumoylated by SENP1. Ubiquitinated, leading to its degradation by the proteasome. Proteasomal degradation is required for efficient transcriptional activity and is prevented by HR. Post-translationally, monomethylated at Lys-38 by EZH2, this creates a degron recognized by a DCX (DDB1-DCAF1/VPRBP-CUL4A-RBX1) E3 ubiquitin ligase complex. In terms of tissue distribution, expressed in cerebellum, heart, liver, lung, kidney, retina and brown and white adipose tissues. Expressed in the subset of mature Th17 cells.

The protein localises to the nucleus. Its function is as follows. Nuclear receptor that binds DNA as a monomer to ROR response elements (RORE) containing a single core motif half-site 5'-AGGTCA-3' preceded by a short A-T-rich sequence. Key regulator of embryonic development, cellular differentiation, immunity, circadian rhythm as well as lipid, steroid, xenobiotics and glucose metabolism. Considered to have intrinsic transcriptional activity, have some natural ligands like oxysterols that act as agonists (25-hydroxycholesterol) or inverse agonists (7-oxygenated sterols), enhancing or repressing the transcriptional activity, respectively. Recruits distinct combinations of cofactors to target genes regulatory regions to modulate their transcriptional expression, depending on the tissue, time and promoter contexts. Regulates genes involved in photoreceptor development including OPN1SW, OPN1SM and ARR3 and skeletal muscle development with MYOD1. Required for proper cerebellum development, regulates SHH gene expression, among others, to induce granule cells proliferation as well as expression of genes involved in calcium-mediated signal transduction. Regulates the circadian expression of several clock genes, including CLOCK, BMAL1, NPAS2 and CRY1. Competes with NR1D1 for binding to their shared DNA response element on some clock genes such as BMAL1, CRY1 and NR1D1 itself, resulting in NR1D1-mediated repression or RORA-mediated activation of clock genes expression, leading to the circadian pattern of clock genes expression. Therefore influences the period length and stability of the clock. Regulates genes involved in lipid metabolism such as apolipoproteins APOA1, APOA5, APOC3 and PPARG. In liver, has specific and redundant functions with RORC as positive or negative modulator of expression of genes encoding phase I and phase II proteins involved in the metabolism of lipids, steroids and xenobiotics, such as CYP7B1 and SULT2A1. Induces a rhythmic expression of some of these genes. In addition, interplays functionally with NR1H2 and NR1H3 for the regulation of genes involved in cholesterol metabolism. Also involved in the regulation of hepatic glucose metabolism through the modulation of G6PC1 and PCK1. In adipose tissue, plays a role as negative regulator of adipocyte differentiation, probably acting through dual mechanisms. May suppress CEBPB-dependent adipogenesis through direct interaction and PPARG-dependent adipogenesis through competition for DNA-binding. Downstream of IL6 and TGFB and synergistically with RORC isoform 2, is implicated in the lineage specification of uncommitted CD4(+) T-helper (T(H)) cells into T(H)17 cells, antagonizing the T(H)1 program. Probably regulates IL17 and IL17F expression on T(H) by binding to the essential enhancer conserved non-coding sequence 2 (CNS2) in the IL17-IL17F locus. Involved in hypoxia signaling by interacting with and activating the transcriptional activity of HIF1A. May inhibit cell growth in response to cellular stress. May exert an anti-inflammatory role by inducing CHUK expression and inhibiting NF-kappa-B signaling. The protein is Nuclear receptor ROR-alpha (Rora) of Mus musculus (Mouse).